The primary structure comprises 424 residues: Histidine--tRNA ligase (424 aa).

This sequence belongs to the class-II aminoacyl-tRNA synthetase family. In terms of assembly, homodimer.

It is found in the cytoplasm. The enzyme catalyses tRNA(His) + L-histidine + ATP = L-histidyl-tRNA(His) + AMP + diphosphate + H(+). The protein is Histidine--tRNA ligase of Thioalkalivibrio sulfidiphilus (strain HL-EbGR7).